The sequence spans 208 residues: Ribosomal RNA large subunit methyltransferase E (208 aa).

The S-adenosyl-L-methionine site is built by G63, W65, D83, D99, and D124. K164 serves as the catalytic Proton acceptor.

This sequence belongs to the class I-like SAM-binding methyltransferase superfamily. RNA methyltransferase RlmE family.

The protein resides in the cytoplasm. It catalyses the reaction uridine(2552) in 23S rRNA + S-adenosyl-L-methionine = 2'-O-methyluridine(2552) in 23S rRNA + S-adenosyl-L-homocysteine + H(+). In terms of biological role, specifically methylates the uridine in position 2552 of 23S rRNA at the 2'-O position of the ribose in the fully assembled 50S ribosomal subunit. The polypeptide is Ribosomal RNA large subunit methyltransferase E (Blochmanniella pennsylvanica (strain BPEN)).